A 269-amino-acid chain; its full sequence is Glutamate racemase (269 aa).

Residues 14 to 15 (DS) and 46 to 47 (YS) each bind substrate. Cysteine 78 functions as the Proton donor/acceptor in the catalytic mechanism. 79 to 80 (NT) serves as a coordination point for substrate. The active-site Proton donor/acceptor is the cysteine 189. 190–191 (TH) lines the substrate pocket.

This sequence belongs to the aspartate/glutamate racemases family.

It carries out the reaction L-glutamate = D-glutamate. The protein operates within cell wall biogenesis; peptidoglycan biosynthesis. Provides the (R)-glutamate required for cell wall biosynthesis. The polypeptide is Glutamate racemase (Haemophilus influenzae (strain PittGG)).